We begin with the raw amino-acid sequence, 412 residues long: tRNA (guanine-N(7)-)-methyltransferase non-catalytic subunit WDR4 (412 aa).

At alanine 2 the chain carries N-acetylalanine. 7 WD repeats span residues 3–40 (GSVG…IYDC), 50–90 (NKGE…LFRT), 94–131 (QCLS…SFSV), 137–174 (CGRL…VSWA), 180–218 (IESF…LWEY), 230–273 (ASLQ…IFQL), and 319–373 (PVGD…SYLK). The segment at 377-412 (ERLQQQLEKKQRRRSPPPGPDGHAKKMRPGEATLSC) is disordered. Residues serine 391 and serine 411 each carry the phosphoserine modification.

It belongs to the WD repeat TRM82 family. As to quaternary structure, non-catalytic component of the METTL1-WDR4 complex, composed of METTL1 and WDR4. Interacts with FEN1; the interaction is direct.

The protein resides in the nucleus. The protein localises to the chromosome. It participates in tRNA modification; N(7)-methylguanine-tRNA biosynthesis. In terms of biological role, non-catalytic component of the METTL1-WDR4 methyltransferase complex required for the formation of N(7)-methylguanine in a subset of RNA species, such as tRNAs, mRNAs and microRNAs (miRNAs). In the METTL1-WDR4 methyltransferase complex, WDR4 acts as a scaffold for tRNA-binding. Required for the formation of N(7)-methylguanine at position 46 (m7G46) in a large subset of tRNAs that contain the 5'-RAGGU-3' motif within the variable loop. M7G46 interacts with C13-G22 in the D-loop to stabilize tRNA tertiary structure and protect tRNAs from decay. Also required for the formation of N(7)-methylguanine at internal sites in a subset of mRNAs. Also required for methylation of a specific subset of miRNAs, such as let-7. Independently of METTL1, also plays a role in genome stability: localizes at the DNA replication site and regulates endonucleolytic activities of FEN1. The polypeptide is tRNA (guanine-N(7)-)-methyltransferase non-catalytic subunit WDR4 (Homo sapiens (Human)).